The following is a 212-amino-acid chain: Thiamine-phosphate synthase (212 aa).

4-amino-2-methyl-5-(diphosphooxymethyl)pyrimidine-binding positions include 40–44 (QFREK) and Asn-75. Positions 76 and 95 each coordinate Mg(2+). Ser-113 provides a ligand contact to 4-amino-2-methyl-5-(diphosphooxymethyl)pyrimidine. Position 139–141 (139–141 (TSS)) interacts with 2-[(2R,5Z)-2-carboxy-4-methylthiazol-5(2H)-ylidene]ethyl phosphate. A 4-amino-2-methyl-5-(diphosphooxymethyl)pyrimidine-binding site is contributed by Lys-142. Residues Gly-171 and 191–192 (IS) each bind 2-[(2R,5Z)-2-carboxy-4-methylthiazol-5(2H)-ylidene]ethyl phosphate.

The protein belongs to the thiamine-phosphate synthase family. The cofactor is Mg(2+).

It carries out the reaction 2-[(2R,5Z)-2-carboxy-4-methylthiazol-5(2H)-ylidene]ethyl phosphate + 4-amino-2-methyl-5-(diphosphooxymethyl)pyrimidine + 2 H(+) = thiamine phosphate + CO2 + diphosphate. The enzyme catalyses 2-(2-carboxy-4-methylthiazol-5-yl)ethyl phosphate + 4-amino-2-methyl-5-(diphosphooxymethyl)pyrimidine + 2 H(+) = thiamine phosphate + CO2 + diphosphate. The catalysed reaction is 4-methyl-5-(2-phosphooxyethyl)-thiazole + 4-amino-2-methyl-5-(diphosphooxymethyl)pyrimidine + H(+) = thiamine phosphate + diphosphate. Its pathway is cofactor biosynthesis; thiamine diphosphate biosynthesis; thiamine phosphate from 4-amino-2-methyl-5-diphosphomethylpyrimidine and 4-methyl-5-(2-phosphoethyl)-thiazole: step 1/1. Its function is as follows. Condenses 4-methyl-5-(beta-hydroxyethyl)thiazole monophosphate (THZ-P) and 2-methyl-4-amino-5-hydroxymethyl pyrimidine pyrophosphate (HMP-PP) to form thiamine monophosphate (TMP). The chain is Thiamine-phosphate synthase from Staphylococcus epidermidis (strain ATCC 35984 / DSM 28319 / BCRC 17069 / CCUG 31568 / BM 3577 / RP62A).